The sequence spans 120 residues: Membrane-anchored ubiquitin-fold protein 5 (120 aa).

The Ubiquitin-like domain occupies 7–72 (IELKFRLADG…ILENNKTLSE (66 aa)). Cys-115 is lipidated: S-palmitoyl cysteine. At Cys-117 the chain carries Cysteine methyl ester. Cys-117 carries the S-geranylgeranyl cysteine lipid modification. A propeptide spans 118–120 (CIL) (removed in mature form).

In terms of tissue distribution, ubiquitous.

Its subcellular location is the cell membrane. Its function is as follows. May serve as docking site to facilitate the association of other proteins to the plasma membrane. The sequence is that of Membrane-anchored ubiquitin-fold protein 5 (MUB5) from Arabidopsis thaliana (Mouse-ear cress).